We begin with the raw amino-acid sequence, 548 residues long: Thermolysin (548 aa).

Positions 1 to 28 are cleaved as a signal peptide; that stretch reads MKMKMKLASFGLAAGLAAQVFLPYNALA. The propeptide at 29–232 is activation peptide; sequence STEHVTWNQQ…DAAKPGDVKS (204 aa). Positions 289, 291, 293, and 370 each coordinate Ca(2+). H374 serves as a coordination point for Zn(2+). E375 is a catalytic residue. Residues H378 and E398 each contribute to the Zn(2+) site. The Ca(2+) site is built by E409, N415, D417, E419, E422, Y425, T426, I429, and D432. H463 acts as the Proton donor in catalysis.

The protein belongs to the peptidase M4 family. Requires Ca(2+) as cofactor. Zn(2+) serves as cofactor.

It is found in the secreted. The enzyme catalyses Preferential cleavage: Xaa-|-Leu &gt; Xaa-|-Phe.. Functionally, extracellular zinc metalloprotease. The sequence is that of Thermolysin (npr) from Bacillus thermoproteolyticus.